The chain runs to 218 residues: Glutathione S-transferase Mu 4 (218 aa).

Residues 1–88 (MPMTLGYWDI…YIARKHNLCG (88 aa)) form the GST N-terminal domain. Residues 7–8 (YW), 46–50 (WLSEK), 59–60 (NL), and 72–73 (QS) each bind glutathione. Residues 90 to 208 (TEEEKIRVDI…KTSRFLRTPL (119 aa)) enclose the GST C-terminal domain. Tyr-116 is a substrate binding site.

Belongs to the GST superfamily. Mu family. In terms of assembly, homodimer. In terms of tissue distribution, widely expressed.

Its subcellular location is the cytoplasm. It catalyses the reaction RX + glutathione = an S-substituted glutathione + a halide anion + H(+). The catalysed reaction is 1-chloro-2,4-dinitrobenzene + glutathione = 2,4-dinitrophenyl-S-glutathione + chloride + H(+). It carries out the reaction (13S,14S)-epoxy-(4Z,7Z,9E,11E,16Z,19Z)-docosahexaenoate + glutathione = (13R)-S-glutathionyl-(14S)-hydroxy-(4Z,7Z,9E,11E,16Z,19Z)-docosahexaenoate. The enzyme catalyses leukotriene C4 = leukotriene A4 + glutathione. Conjugation of reduced glutathione to a wide number of exogenous and endogenous hydrophobic electrophiles. Catalyzes the conjugation of leukotriene A4 with reduced glutathione (GSH) to form leukotriene C4. Can also catalyze the transfer of a glutathionyl group from glutathione (GSH) to 13(S),14(S)-epoxy-docosahexaenoic acid to form maresin conjugate in tissue regeneration 1 (MCTR1), a bioactive lipid mediator that possess potent anti-inflammatory and proresolving actions. In Mus musculus (Mouse), this protein is Glutathione S-transferase Mu 4.